The chain runs to 459 residues: tRNA modification GTPase MnmE (459 aa).

(6S)-5-formyl-5,6,7,8-tetrahydrofolate is bound by residues R22, E85, and R124. Positions 221-380 constitute a TrmE-type G domain; that stretch reads GLSTVIVGKP…LEIQIRDLFF (160 aa). N231 provides a ligand contact to K(+). GTP is bound by residues 231–236, 250–256, and 275–278; these read NVGKSS, TEVAGTT, and DTAG. S235 contacts Mg(2+). Positions 250, 252, and 255 each coordinate K(+). T256 contributes to the Mg(2+) binding site. K459 lines the (6S)-5-formyl-5,6,7,8-tetrahydrofolate pocket.

It belongs to the TRAFAC class TrmE-Era-EngA-EngB-Septin-like GTPase superfamily. TrmE GTPase family. Homodimer. Heterotetramer of two MnmE and two MnmG subunits. Requires K(+) as cofactor.

The protein resides in the cytoplasm. In terms of biological role, exhibits a very high intrinsic GTPase hydrolysis rate. Involved in the addition of a carboxymethylaminomethyl (cmnm) group at the wobble position (U34) of certain tRNAs, forming tRNA-cmnm(5)s(2)U34. The chain is tRNA modification GTPase MnmE from Staphylococcus aureus (strain USA300 / TCH1516).